A 288-amino-acid polypeptide reads, in one-letter code: N-acetylneuraminate lyase (288 aa).

Aceneuramate contacts are provided by serine 44 and threonine 45. Catalysis depends on tyrosine 133, which acts as the Proton donor. The Schiff-base intermediate with substrate role is filled by lysine 161. Aceneuramate is bound by residues threonine 163, glycine 185, aspartate 187, glutamate 188, and serine 204.

This sequence belongs to the DapA family. NanA subfamily. As to quaternary structure, homotetramer.

Its subcellular location is the cytoplasm. It carries out the reaction aceneuramate = aldehydo-N-acetyl-D-mannosamine + pyruvate. Its pathway is amino-sugar metabolism; N-acetylneuraminate degradation; D-fructose 6-phosphate from N-acetylneuraminate: step 1/5. Catalyzes the reversible aldol cleavage of N-acetylneuraminic acid (sialic acid; Neu5Ac) to form pyruvate and N-acetylmannosamine (ManNAc) via a Schiff base intermediate. The sequence is that of N-acetylneuraminate lyase from Clostridium perfringens (strain ATCC 13124 / DSM 756 / JCM 1290 / NCIMB 6125 / NCTC 8237 / Type A).